A 155-amino-acid polypeptide reads, in one-letter code: Basic phospholipase A2 PC9 (155 aa).

Residues 1-21 (MYPAHLLVLLAVCVSLLGASA) form the signal peptide. Residues 22-27 (ISPRPL) constitute a propeptide that is removed on maturation. 7 disulfide bridges follow: Cys38-Cys98, Cys54-Cys144, Cys56-Cys72, Cys71-Cys125, Cys78-Cys118, Cys87-Cys111, and Cys105-Cys116. Positions 55, 57, and 59 each coordinate Ca(2+). His75 is an active-site residue. Asp76 lines the Ca(2+) pocket. Asp119 is a catalytic residue.

The protein belongs to the phospholipase A2 family. Group I subfamily. D49 sub-subfamily. It depends on Ca(2+) as a cofactor. As to expression, expressed by the venom gland.

Its subcellular location is the secreted. The enzyme catalyses a 1,2-diacyl-sn-glycero-3-phosphocholine + H2O = a 1-acyl-sn-glycero-3-phosphocholine + a fatty acid + H(+). Functionally, snake venom phospholipase A2 (PLA2) that inhibits neuromuscular transmission by blocking acetylcholine release from the nerve termini. PLA2 catalyzes the calcium-dependent hydrolysis of the 2-acyl groups in 3-sn-phosphoglycerides. The polypeptide is Basic phospholipase A2 PC9 (Laticauda colubrina (Yellow-lipped sea krait)).